Here is a 206-residue protein sequence, read N- to C-terminus: Large ribosomal subunit protein uL4 (206 aa).

This sequence belongs to the universal ribosomal protein uL4 family. In terms of assembly, part of the 50S ribosomal subunit.

In terms of biological role, one of the primary rRNA binding proteins, this protein initially binds near the 5'-end of the 23S rRNA. It is important during the early stages of 50S assembly. It makes multiple contacts with different domains of the 23S rRNA in the assembled 50S subunit and ribosome. Forms part of the polypeptide exit tunnel. This Cereibacter sphaeroides (strain KD131 / KCTC 12085) (Rhodobacter sphaeroides) protein is Large ribosomal subunit protein uL4.